The sequence spans 669 residues: Alpha-1,6-mannosylglycoprotein 6-beta-N-acetylglucosaminyltransferase (669 aa).

Topologically, residues 1–7 (MRRRHRC) are cytoplasmic. Residues 8-28 (VALLFIFSAFITPLGFFYYTI) traverse the membrane as a helical; Signal-anchor for type II membrane protein segment. Residues 29-669 (SNESKRYSEE…EQHAICKKCL (641 aa)) lie on the Lumenal side of the membrane. Asn-30, Asn-412, Asn-437, and Asn-626 each carry an N-linked (GlcNAc...) asparagine glycan.

The protein belongs to the glycosyltransferase 18 family. As to expression, expressed in a complex subset of neurons in larvae and in the spermathecal and pharyngeal-intestinal valves and certain vulval cells of adults.

The protein localises to the golgi apparatus membrane. The catalysed reaction is N(4)-{beta-D-GlcNAc-(1-&gt;2)-[beta-D-GlcNAc-(1-&gt;4)]-alpha-D-Man-(1-&gt;3)-[beta-D-GlcNAc-(1-&gt;2)-alpha-D-Man-(1-&gt;6)]-beta-D-Man-(1-&gt;4)-beta-D-GlcNAc-(1-&gt;4)-beta-D-GlcNAc}-L-asparaginyl-[protein] + UDP-N-acetyl-alpha-D-glucosamine = N(4)-{beta-D-GlcNAc-(1-&gt;2)-[beta-D-GlcNAc-(1-&gt;4)]-alpha-D-Man-(1-&gt;3)-[beta-D-GlcNAc-(1-&gt;2)-[beta-D-GlcNAc-(1-&gt;6)]-alpha-D-Man-(1-&gt;6)]-beta-D-Man-(1-&gt;4)-beta-D-GlcNAc-(1-&gt;4)-beta-D-GlcNAc}-L-asparaginyl-[protein] + UDP + H(+). The protein operates within protein modification; protein glycosylation. In terms of biological role, catalyzes the addition of N-acetylglucosamine (GlcNAc) in beta 1-6 linkage to the alpha-linked mannose of biantennary N-linked oligosaccharides. The sequence is that of Alpha-1,6-mannosylglycoprotein 6-beta-N-acetylglucosaminyltransferase (gly-2) from Caenorhabditis elegans.